The chain runs to 157 residues: SsrA-binding protein (157 aa).

The protein belongs to the SmpB family.

It is found in the cytoplasm. Its function is as follows. Required for rescue of stalled ribosomes mediated by trans-translation. Binds to transfer-messenger RNA (tmRNA), required for stable association of tmRNA with ribosomes. tmRNA and SmpB together mimic tRNA shape, replacing the anticodon stem-loop with SmpB. tmRNA is encoded by the ssrA gene; the 2 termini fold to resemble tRNA(Ala) and it encodes a 'tag peptide', a short internal open reading frame. During trans-translation Ala-aminoacylated tmRNA acts like a tRNA, entering the A-site of stalled ribosomes, displacing the stalled mRNA. The ribosome then switches to translate the ORF on the tmRNA; the nascent peptide is terminated with the 'tag peptide' encoded by the tmRNA and targeted for degradation. The ribosome is freed to recommence translation, which seems to be the essential function of trans-translation. The chain is SsrA-binding protein from Lacticaseibacillus paracasei (strain ATCC 334 / BCRC 17002 / CCUG 31169 / CIP 107868 / KCTC 3260 / NRRL B-441) (Lactobacillus paracasei).